The sequence spans 741 residues: Zinc transporter ZIP6 (741 aa).

The first 20 residues, Met-1–Pro-20, serve as a signal peptide directing secretion. Residues Leu-21–Trp-311 lie on the Extracellular side of the membrane. Residue Asn-68 is glycosylated (N-linked (GlcNAc...) asparagine). Over residues His-95–Arg-111 the composition is skewed to basic and acidic residues. 2 disordered regions span residues His-95–Ser-172 and Glu-189–Arg-213. Residues Asp-135–Lys-147 are compositionally biased toward polar residues. The N-linked (GlcNAc...) asparagine glycan is linked to Asn-142. A compositionally biased stretch (basic and acidic residues) spans Arg-150–Lys-162. Residues Glu-163–Ser-172 show a composition bias toward low complexity. Polar residues predominate over residues Ile-200–Thr-209. N-linked (GlcNAc...) asparagine glycosylation is found at Asn-226, Asn-251, and Asn-268. The helical transmembrane segment at Leu-312–Val-332 threads the bilayer. Over Pro-333–Lys-341 the chain is Cytoplasmic. Residues Phe-342–His-362 form a helical membrane-spanning segment. Residues Leu-363–Lys-409 are Extracellular-facing. A helical transmembrane segment spans residues Gly-410–Ile-430. The Cytoplasmic segment spans residues Lys-431–Ala-643. Residues Lys-434 to Gln-494 are disordered. Residues Val-450–Arg-475 adopt a coiled-coil conformation. Phosphoserine is present on residues Ser-457 and Ser-464. Residues Asn-466–Glu-477 show a composition bias toward basic and acidic residues. The span at Gln-481–Gln-494 shows a compositional bias: polar residues. A helical membrane pass occupies residues Val-644–Ile-664. Residues Gly-665–Ser-672 are Extracellular-facing. Residue Asn-670 is glycosylated (N-linked (GlcNAc...) asparagine). A helical membrane pass occupies residues Met-673–Pro-693. The Cytoplasmic portion of the chain corresponds to Glu-694–Tyr-710. A helical membrane pass occupies residues Phe-711 to Phe-731. The Extracellular segment spans residues Glu-732–Phe-741.

It belongs to the ZIP transporter (TC 2.A.5) family. As to quaternary structure, interacts with SLC39A10; which triggers cells to undergo EMT and mitosis. Found in a complex with SLC39A6, SLC39A10 and with the 'Ser-727' phosphorylated form of STAT3 throughout mitosis. Found in a complex with SLC39A6, SLC39A10 and with NCAM1; this complex controls NCAM1 phosphorylation and integration into focal adhesion complexes during epithelial-to-mesenchymal transition (EMT). Found in a complex with SLC39A6, SLC39A10 and with GSK3B that controls NCAM1 phosphorylation. Post-translationally, cleaved on the N-terminus before locating to the plasma membrane. In terms of processing, N-glycosylated. Phosphorylated by ZAP70 in response to TCR stimulation leading to its activation. In terms of tissue distribution, expressed in the endothelial cells of the brain capillaries.

It localises to the cell membrane. The protein resides in the cell projection. It is found in the lamellipodium membrane. Its subcellular location is the membrane raft. The protein localises to the apical cell membrane. The enzyme catalyses Zn(2+)(in) = Zn(2+)(out). In terms of biological role, zinc-influx transporter which plays a role in zinc homeostasis and in the induction of epithelial-to-mesenchymal transition (EMT). When associated with SLC39A10, the heterodimer formed by SLC39A10 and SLC39A6 mediates cellular zinc uptake to trigger cells to undergo epithelial- to-mesenchymal transition (EMT). The SLC39A10-SLC39A6 heterodimer also controls NCAM1 phosphorylation and its integration into focal adhesion complexes during EMT. Zinc influx inactivates GSK3B, enabling unphosphorylated SNAI1 in the nucleus to down-regulate adherence genes such as CDH1, causing loss of cell adherence. In addition, the SLC39A10-SLC39A6 heterodimer plays an essentiel role in initiating mitosis by importing zinc into cells to initiate a pathway resulting in the onset of mitosis. Participates in the T-cell receptor signaling regulation by mediating cellular zinc uptake into activated lymphocytes. Regulates the zinc influx necessary for proper meiotic progression to metaphase II (MII) that allows the oocyte-to-egg transition. This Rattus norvegicus (Rat) protein is Zinc transporter ZIP6.